The primary structure comprises 142 residues: Coactosin-like protein (142 aa).

At Ala-2 the chain carries N-acetylalanine. Residues 2-130 enclose the ADF-H domain; the sequence is ATKIDKEACR…EEDFIKSELK (129 aa). Residues 66 to 75 are flexible and important for F-actin binding; sequence TGDAMSKRSK. Residues Lys-102 and Lys-126 each carry the N6-acetyllysine modification.

It belongs to the actin-binding proteins ADF family. Coactosin subfamily. As to quaternary structure, interacts with 5-lipoxygenase (ALOX5/5LO) in a calcium-independent manner. Binds to F-actin with a stoichiometry of 1:2. As to expression, widely expressed with highest levels in placenta, lung, kidney and peripheral blood leukocytes and lower levels in brain, liver and pancreas.

It localises to the cytoplasm. The protein resides in the cytoskeleton. It is found in the nucleus. Functionally, binds to F-actin in a calcium-independent manner. Has no direct effect on actin depolymerization. Acts as a chaperone for ALOX5 (5LO), influencing both its stability and activity in leukotrienes synthesis. This chain is Coactosin-like protein (COTL1), found in Homo sapiens (Human).